Consider the following 476-residue polypeptide: Glycogen synthase (476 aa).

Lysine 15 provides a ligand contact to ADP-alpha-D-glucose.

The protein belongs to the glycosyltransferase 1 family. Bacterial/plant glycogen synthase subfamily.

The catalysed reaction is [(1-&gt;4)-alpha-D-glucosyl](n) + ADP-alpha-D-glucose = [(1-&gt;4)-alpha-D-glucosyl](n+1) + ADP + H(+). The protein operates within glycan biosynthesis; glycogen biosynthesis. Synthesizes alpha-1,4-glucan chains using ADP-glucose. The sequence is that of Glycogen synthase from Streptococcus equi subsp. equi (strain 4047).